We begin with the raw amino-acid sequence, 224 residues long: Small ribosomal subunit protein uS3c (224 aa).

The KH type-2 domain maps to 43–124 (IKNYIQKNRK…RLNIAIEKVK (82 aa)).

This sequence belongs to the universal ribosomal protein uS3 family. As to quaternary structure, part of the 30S ribosomal subunit.

The protein localises to the plastid. Its subcellular location is the chloroplast. This is Small ribosomal subunit protein uS3c (rps3) from Saccharum hybrid (Sugarcane).